The following is a 209-amino-acid chain: Transmembrane 4 L6 family member 19 (209 aa).

Residues Met-1–Arg-16 lie on the Cytoplasmic side of the membrane. Residues Ile-17–Leu-37 traverse the membrane as a helical segment. Residues Leu-38–Thr-59 lie on the Extracellular side of the membrane. A helical membrane pass occupies residues Gly-60–Trp-80. Residues Arg-81–Ser-93 lie on the Cytoplasmic side of the membrane. A helical transmembrane segment spans residues Val-94–Thr-114. Residues Ser-115–Ser-175 are Extracellular-facing. An N-linked (GlcNAc...) asparagine glycan is attached at Asn-133. The helical transmembrane segment at Leu-176–Ile-196 threads the bilayer. Positions Leu-186–Ile-196 are important for homodimerization. Residues Asn-197 to Lys-209 are Cytoplasmic-facing.

The protein belongs to the L6 tetraspanin family. As to quaternary structure, may form homodimers and homooligomers. Interacts with integrins ITGAV and ITGB3. Interacts with components of members of the V0 complex of vacuolar(H+)-ATPase (V-ATPase), including ATP6V0B and ATP6V0D2; this interaction inhibits V1-V0 complex assembly. In adipose tissue, expressed by macrophages.

It is found in the lysosome membrane. The protein resides in the cytoplasm. The protein localises to the cytoskeleton. It localises to the cell projection. Its subcellular location is the filopodium. In terms of biological role, negatively regulates vacuolar (H+)-ATPase (V-ATPase) activity by interacting with members of V-ATPase V0 complex and hence inhibiting V1-V0 complex assembly. Required for multinucleation during osteoclast differentiation. The sequence is that of Transmembrane 4 L6 family member 19 (TM4SF19) from Homo sapiens (Human).